The primary structure comprises 494 residues: Alpha-amylase A (494 aa).

The N-terminal stretch at 1–18 is a signal peptide; sequence MFLAKSLVCLALLAVANA. Gln19 bears the Pyrrolidone carboxylic acid mark. Cys46 and Cys102 form a disulfide bridge. Ca(2+) contacts are provided by Asn116, Arg165, and Asp174. Cysteines 153 and 167 form a disulfide. Arg202 contacts chloride. Residue Asp204 is the Nucleophile of the active site. His208 contributes to the Ca(2+) binding site. Glu241 serves as the catalytic Proton donor. Chloride-binding residues include Asn304 and Arg343. 2 disulfide bridges follow: Cys376–Cys382 and Cys448–Cys460.

It belongs to the glycosyl hydrolase 13 family. Monomer. Ca(2+) is required as a cofactor. The cofactor is chloride.

The catalysed reaction is Endohydrolysis of (1-&gt;4)-alpha-D-glucosidic linkages in polysaccharides containing three or more (1-&gt;4)-alpha-linked D-glucose units.. The chain is Alpha-amylase A (Amy-d) from Drosophila mauritiana (Fruit fly).